Here is a 218-residue protein sequence, read N- to C-terminus: Peptide methionine sulfoxide reductase MsrA (218 aa).

Residue cysteine 57 is part of the active site.

Belongs to the MsrA Met sulfoxide reductase family.

It carries out the reaction L-methionyl-[protein] + [thioredoxin]-disulfide + H2O = L-methionyl-(S)-S-oxide-[protein] + [thioredoxin]-dithiol. It catalyses the reaction [thioredoxin]-disulfide + L-methionine + H2O = L-methionine (S)-S-oxide + [thioredoxin]-dithiol. Has an important function as a repair enzyme for proteins that have been inactivated by oxidation. Catalyzes the reversible oxidation-reduction of methionine sulfoxide in proteins to methionine. The sequence is that of Peptide methionine sulfoxide reductase MsrA from Brucella suis biovar 1 (strain 1330).